The primary structure comprises 279 residues: NADPH-dependent 7-cyano-7-deazaguanine reductase (279 aa).

86–88 contributes to the substrate binding site; sequence IES. 88–89 lines the NADPH pocket; it reads SK. Cys187 acts as the Thioimide intermediate in catalysis. The active-site Proton donor is the Asp194. 226–227 contacts substrate; it reads HE. 255–256 is a binding site for NADPH; sequence RG.

The protein belongs to the GTP cyclohydrolase I family. QueF type 2 subfamily. In terms of assembly, homodimer.

The protein localises to the cytoplasm. The catalysed reaction is 7-aminomethyl-7-carbaguanine + 2 NADP(+) = 7-cyano-7-deazaguanine + 2 NADPH + 3 H(+). Its pathway is tRNA modification; tRNA-queuosine biosynthesis. Catalyzes the NADPH-dependent reduction of 7-cyano-7-deazaguanine (preQ0) to 7-aminomethyl-7-deazaguanine (preQ1). The sequence is that of NADPH-dependent 7-cyano-7-deazaguanine reductase from Haemophilus influenzae (strain PittEE).